The primary structure comprises 964 residues: SKI family transcriptional corepressor 1 (964 aa).

Disordered regions lie at residues 45-72, 278-365, 414-452, 525-587, 610-766, and 793-842; these read TQLG…SSAL, RTFS…GGSA, AGEP…PGPG, AGGG…RKSS, REAY…GPAA, and YLCT…EDGL. Residues 283-310 show a composition bias toward gly residues; sequence QGGGGGGANSGSGGAGKGGAGGGGGPGC. Over residues 345 to 355 the composition is skewed to low complexity; the sequence is ALGLAAAANGP. Composition is skewed to gly residues over residues 356 to 365 and 417 to 440; these read AGPGGPGGSA and PKGG…GPGA. Residues 571-583 are compositionally biased toward pro residues; sequence SLAPLAPPPPPPA. The segment covering 652-661 has biased composition (acidic residues); that stretch reads DTADEPEVDV. A compositionally biased stretch (basic and acidic residues) spans 798–808; sequence ETHEPDKEDNH. Positions 823–834 are enriched in polar residues; the sequence is DQRSVSQPSPAN. Residues 857–921 are a coiled coil; that stretch reads ENLAREELQK…DTLCNELDQE (65 aa).

Belongs to the SKI family. In terms of assembly, interacts with LBX1. Interacts with SMAD1, SMAD2 and SMAD3.

The protein resides in the nucleus. Its function is as follows. Inhibits BMP signaling. Acts as a transcriptional corepressor of LBX1. In Rattus norvegicus (Rat), this protein is SKI family transcriptional corepressor 1 (Skor1).